The primary structure comprises 258 residues: Granzyme M (258 aa).

The 230-residue stretch at 21 to 250 folds into the Peptidase S1 domain; it reads IIGGREAVPH…YSSWIRKVIG (230 aa). A disulfide bond links Cys-46 and Cys-62. Catalysis depends on charge relay system residues His-61 and Asp-107. Residues 122–141 are disordered; the sequence is NVKPLALPRKPRDKPAEGSR. 3 cysteine pairs are disulfide-bonded: Cys-142–Cys-210, Cys-173–Cys-189, and Cys-200–Cys-226. Asn-174 carries N-linked (GlcNAc...) asparagine glycosylation. Catalysis depends on Ser-204, which acts as the Charge relay system. Residue Asn-225 is glycosylated (N-linked (GlcNAc...) asparagine).

Belongs to the peptidase S1 family. Granzyme subfamily.

Its subcellular location is the secreted. It localises to the cytoplasmic granule. Cleaves peptide substrates after methionine, leucine, and norleucine. Physiological substrates include EZR, alpha-tubulins and the apoptosis inhibitor BIRC5/Survivin. Promotes caspase activation and subsequent apoptosis of target cells. The polypeptide is Granzyme M (Gzmm) (Rattus norvegicus (Rat)).